The chain runs to 393 residues: tRNA-specific 2-thiouridylase MnmA (393 aa).

ATP is bound by residues 19–26 (AMSGGVDS) and L45. C113 (nucleophile) is an active-site residue. The cysteines at positions 113 and 210 are disulfide-linked. Residue G137 participates in ATP binding. Residues 160-162 (RDQ) are interaction with tRNA. Catalysis depends on C210, which acts as the Cysteine persulfide intermediate.

Belongs to the MnmA/TRMU family.

It is found in the cytoplasm. The enzyme catalyses S-sulfanyl-L-cysteinyl-[protein] + uridine(34) in tRNA + AH2 + ATP = 2-thiouridine(34) in tRNA + L-cysteinyl-[protein] + A + AMP + diphosphate + H(+). Its function is as follows. Catalyzes the 2-thiolation of uridine at the wobble position (U34) of tRNA, leading to the formation of s(2)U34. This is tRNA-specific 2-thiouridylase MnmA from Bradyrhizobium diazoefficiens (strain JCM 10833 / BCRC 13528 / IAM 13628 / NBRC 14792 / USDA 110).